The following is a 366-amino-acid chain: Trans-enoyl reductase caaB (366 aa).

In terms of domain architecture, Enoyl reductase (ER) spans Gly19–Val363. Tyr219 contributes to the NADP(+) binding site.

Belongs to the zinc-containing alcohol dehydrogenase family. As to quaternary structure, monomer.

It participates in secondary metabolite biosynthesis. Its function is as follows. Trans-enoyl reductase; part of the gene cluster that produces the acyltetronic acid derivatives carlosic acid, agglomerin F and carlosic acid methyl ether. The PKS domains of caaA condenses two malonyl-CoAs into an acetyl starter unit, and form 1,3-diketohexanyl-ACP with the help of the trans-enoyl reductase caaB. Next, the C domain of caaA forms the ester bond between the acyl chain and L-malic acid (derived from the TCA cycle) and accepted by the A domain instead of an amino acid. Finally, the terminal reductase/Dieckmann cyclization (R/DKC) domain cyclizes the intermediate and releases the product as carlosic acid. Decarboxylation of carlosic acid followed by formation of the exocyclic double bond is likely to be catalyzed by the cytochrome P450 monooxygenase caaC. Thus, decarboxylation and oxidation would be coupled (performed by one enzyme) through concomitant abstraction of the hydrogen at C-4. Finally, sequential oxidations of the terminal C-10 methyl group to form carboxylic acid would be catalyzed by the 2-oxoglutarate-dependent dioxygenase caaD, which is required for the biosynthesis of agglomerin F. This is Trans-enoyl reductase caaB from Aspergillus niger (strain ATCC MYA-4892 / CBS 513.88 / FGSC A1513).